The following is a 223-amino-acid chain: Ribonuclease HII (223 aa).

The region spanning 32-223 (FHIAGVDEVG…LKGRFRDNMS (192 aa)) is the RNase H type-2 domain. A divalent metal cation contacts are provided by D38, E39, and D130.

It belongs to the RNase HII family. Requires Mn(2+) as cofactor. It depends on Mg(2+) as a cofactor.

The protein resides in the cytoplasm. It catalyses the reaction Endonucleolytic cleavage to 5'-phosphomonoester.. Its function is as follows. Endonuclease that specifically degrades the RNA of RNA-DNA hybrids. The sequence is that of Ribonuclease HII from Bartonella quintana (strain Toulouse) (Rochalimaea quintana).